A 118-amino-acid polypeptide reads, in one-letter code: Basic phospholipase A2 acanthin-2 (118 aa).

7 cysteine pairs are disulfide-bonded: cysteine 11–cysteine 71, cysteine 27–cysteine 117, cysteine 29–cysteine 45, cysteine 44–cysteine 98, cysteine 51–cysteine 91, cysteine 60–cysteine 84, and cysteine 78–cysteine 89. Ca(2+) contacts are provided by tyrosine 28, glycine 30, and glycine 32. Histidine 48 is a catalytic residue. A Ca(2+)-binding site is contributed by aspartate 49. Aspartate 92 is a catalytic residue.

Ca(2+) serves as cofactor. As to expression, expressed by the venom gland.

The protein localises to the secreted. It carries out the reaction a 1,2-diacyl-sn-glycero-3-phosphocholine + H2O = a 1-acyl-sn-glycero-3-phosphocholine + a fatty acid + H(+). In terms of biological role, snake venom phospholipase A2 (PLA2) that potently inhibits ADP-(IC(50)=12 nM) and collagen-induced (IC(50)=4 nM) platelet aggregation when tested on human whole blood. PLA2 catalyzes the calcium-dependent hydrolysis of the 2-acyl groups in 3-sn-phosphoglycerides. The protein is Basic phospholipase A2 acanthin-2 of Acanthophis antarcticus (Common death adder).